Reading from the N-terminus, the 194-residue chain is Prostaglandin-H2 D-isomerase (194 aa).

Residues 1–24 (MAASHTLWMGLVLLGVLGVLQTRA) form the signal peptide. A Pyrrolidone carboxylic acid modification is found at glutamine 25. A glycan (N-linked (GlcNAc...) asparagine) is linked at asparagine 51. The active-site Nucleophile is cysteine 65. An N-linked (GlcNAc...) asparagine glycan is attached at asparagine 78. A disulfide bridge links cysteine 89 with cysteine 189.

Belongs to the calycin superfamily. Lipocalin family. As to quaternary structure, monomer. As to expression, in the male reproductive system, it is expressed in the testis and epididymis, and is secreted into the seminal fluid.

The protein resides in the rough endoplasmic reticulum. The protein localises to the nucleus membrane. It is found in the golgi apparatus. Its subcellular location is the cytoplasm. It localises to the perinuclear region. The protein resides in the secreted. The enzyme catalyses prostaglandin H2 = prostaglandin D2. Its function is as follows. Catalyzes the conversion of PGH2 to PGD2, a prostaglandin involved in smooth muscle contraction/relaxation and a potent inhibitor of platelet aggregation. Involved in a variety of CNS functions, such as sedation, NREM sleep and PGE2-induced allodynia, and may have an anti-apoptotic role in oligodendrocytes. Binds small non-substrate lipophilic molecules, including biliverdin, bilirubin, retinal, retinoic acid and thyroid hormone, and may act as a scavenger for harmful hydrophobic molecules and as a secretory retinoid and thyroid hormone transporter. Possibly involved in development and maintenance of the blood-brain, blood-retina, blood-aqueous humor and blood-testis barrier. It is likely to play important roles in both maturation and maintenance of the central nervous system and male reproductive system. Involved in PLA2G3-dependent maturation of mast cells. PLA2G3 is secreted by immature mast cells and acts on nearby fibroblasts upstream to PTDGS to synthesize PGD2, which in turn promotes mast cell maturation and degranulation via PTGDR. This is Prostaglandin-H2 D-isomerase (PTGDS) from Equus caballus (Horse).